We begin with the raw amino-acid sequence, 244 residues long: tRNA (guanine-N(1)-)-methyltransferase (244 aa).

S-adenosyl-L-methionine is bound by residues Gly113 and 133 to 138 (IGDYVL).

Belongs to the RNA methyltransferase TrmD family. In terms of assembly, homodimer.

It localises to the cytoplasm. It carries out the reaction guanosine(37) in tRNA + S-adenosyl-L-methionine = N(1)-methylguanosine(37) in tRNA + S-adenosyl-L-homocysteine + H(+). Functionally, specifically methylates guanosine-37 in various tRNAs. The polypeptide is tRNA (guanine-N(1)-)-methyltransferase (Bacillus anthracis (strain A0248)).